The sequence spans 293 residues: Elongation factor Ts (293 aa).

The tract at residues 79 to 82 (TDFV) is involved in Mg(2+) ion dislocation from EF-Tu.

This sequence belongs to the EF-Ts family.

The protein resides in the cytoplasm. Associates with the EF-Tu.GDP complex and induces the exchange of GDP to GTP. It remains bound to the aminoacyl-tRNA.EF-Tu.GTP complex up to the GTP hydrolysis stage on the ribosome. This Macrococcus caseolyticus (strain JCSC5402) (Macrococcoides caseolyticum) protein is Elongation factor Ts.